Here is a 406-residue protein sequence, read N- to C-terminus: COP9 signalosome complex subunit 4 (406 aa).

Position 2 is an N-acetylalanine (Ala-2). At Lys-25 the chain carries N6-acetyllysine. Positions Tyr-197–Ala-366 constitute a PCI domain.

Belongs to the CSN4 family. Component of the CSN complex, composed of COPS1/GPS1, COPS2, COPS3, COPS4, COPS5, COPS6, COPS7 (COPS7A or COPS7B), COPS8 and COPS9. In the complex, it probably interacts directly with COPS1, COPS2, COPS3, COPS5, COPS6, COPS7 (COPS7A or COPS7B) and COPS8. Interacts with TOR1A; the interaction is direct and associates TOR1A and SNAPIN with the CSN complex. Interacts with STON2; controls STON2 neddylation levels. Interacts with ERCC6.

The protein localises to the cytoplasm. It localises to the nucleus. The protein resides in the cytoplasmic vesicle. It is found in the secretory vesicle. Its subcellular location is the synaptic vesicle. In terms of biological role, component of the COP9 signalosome complex (CSN), a complex involved in various cellular and developmental processes. The CSN complex is an essential regulator of the ubiquitin (Ubl) conjugation pathway by mediating the deneddylation of the cullin subunits of SCF-type E3 ligase complexes, leading to decrease the Ubl ligase activity of SCF-type complexes such as SCF, CSA or DDB2. Also involved in the deneddylation of non-cullin subunits such as STON2. The complex is also involved in phosphorylation of p53/TP53, c-jun/JUN, IkappaBalpha/NFKBIA, ITPK1, IRF8/ICSBP and SNAPIN, possibly via its association with CK2 and PKD kinases. CSN-dependent phosphorylation of TP53 and JUN promotes and protects degradation by the Ubl system, respectively. This Rattus norvegicus (Rat) protein is COP9 signalosome complex subunit 4 (Cops4).